Here is a 306-residue protein sequence, read N- to C-terminus: Anamorsin homolog (306 aa).

The segment covering 1–25 (MVPPREDVTVRIVCERRRTAGKEAR) has biased composition (basic and acidic residues). A disordered region spans residues 1–51 (MVPPREDVTVRIVCERRRTAGKEARPPPSAKPTPGNTSSHPNAKETHRSNE). The segment at 59–190 (KQSHRRSIMA…RRNNTTNSVA (132 aa)) is N-terminal SAM-like domain. Residues 191 to 218 (TLNFASNNNNGNDLLIDEDNLLTDASNL) are linker. Positions 236, 242, 245, and 247 each coordinate [2Fe-2S] cluster. The interval 236 to 247 (CSGRAPCDDCTC) is fe-S binding site A. Residues 252–265 (GAKEGNSEQPKEIK) are compositionally biased toward basic and acidic residues. The disordered stretch occupies residues 252 to 272 (GAKEGNSEQPKEIKSSSCGKC). Cys-269, Cys-272, Cys-280, and Cys-283 together coordinate [4Fe-4S] cluster. 2 short sequence motifs (cx2C motif) span residues 269–272 (CGKC) and 280–283 (CASC). Residues 269–283 (CGKCSLGDAFRCASC) form a fe-S binding site B region.

The protein belongs to the anamorsin family. As to quaternary structure, monomer. [2Fe-2S] cluster serves as cofactor. It depends on [4Fe-4S] cluster as a cofactor.

It localises to the cytoplasm. The protein resides in the mitochondrion intermembrane space. Component of the cytosolic iron-sulfur (Fe-S) protein assembly (CIA) machinery. Required for the maturation of extramitochondrial Fe-S proteins. Part of an electron transfer chain functioning in an early step of cytosolic Fe-S biogenesis, facilitating the de novo assembly of a [4Fe-4S] cluster on the cytosolic Fe-S scaffold complex. Electrons are transferred from NADPH via a FAD- and FMN-containing diflavin oxidoreductase. Together with the diflavin oxidoreductase, also required for the assembly of the diferric tyrosyl radical cofactor of ribonucleotide reductase (RNR), probably by providing electrons for reduction during radical cofactor maturation in the catalytic small subunit. The protein is Anamorsin homolog of Phaeodactylum tricornutum (strain CCAP 1055/1).